Reading from the N-terminus, the 249-residue chain is tRNA (guanine-N(1)-)-methyltransferase (249 aa).

S-adenosyl-L-methionine-binding positions include Gly113 and 133–138 (IGDFVV).

Belongs to the RNA methyltransferase TrmD family. Homodimer.

Its subcellular location is the cytoplasm. The catalysed reaction is guanosine(37) in tRNA + S-adenosyl-L-methionine = N(1)-methylguanosine(37) in tRNA + S-adenosyl-L-homocysteine + H(+). Specifically methylates guanosine-37 in various tRNAs. The chain is tRNA (guanine-N(1)-)-methyltransferase from Neisseria meningitidis serogroup C (strain 053442).